The following is a 605-amino-acid chain: Isocitrate dehydrogenase kinase/phosphatase (605 aa).

Residues Ala327–Leu333 and Lys348 each bind ATP. Asp383 is an active-site residue.

This sequence belongs to the AceK family.

The protein localises to the cytoplasm. The catalysed reaction is L-seryl-[isocitrate dehydrogenase] + ATP = O-phospho-L-seryl-[isocitrate dehydrogenase] + ADP + H(+). In terms of biological role, bifunctional enzyme which can phosphorylate or dephosphorylate isocitrate dehydrogenase (IDH) on a specific serine residue. This is a regulatory mechanism which enables bacteria to bypass the Krebs cycle via the glyoxylate shunt in response to the source of carbon. When bacteria are grown on glucose, IDH is fully active and unphosphorylated, but when grown on acetate or ethanol, the activity of IDH declines drastically concomitant with its phosphorylation. This Burkholderia orbicola (strain MC0-3) protein is Isocitrate dehydrogenase kinase/phosphatase.